The sequence spans 163 residues: Putative phosphinothricin acetyltransferase YwnH (163 aa).

Positions 1 to 158 (MTLRLAEHRD…DGKRYDLKIL (158 aa)) constitute an N-acetyltransferase domain. Residues 85–87 (IYI), 94–98 (KGVGS), and 124–126 (NKP) contribute to the acetyl-CoA site.

It belongs to the acetyltransferase family. PAT/BAR subfamily.

The enzyme catalyses phosphinothricin + acetyl-CoA = N-acetylphosphinothricin + CoA + H(+). In terms of biological role, this enzyme is an effector of phosphinothricin tripeptide (PTT or bialaphos) resistance. Inactivates PTT by transfer of an acetyl group. The protein is Putative phosphinothricin acetyltransferase YwnH (ywnH) of Bacillus subtilis (strain 168).